Here is a 104-residue protein sequence, read N- to C-terminus: L-rhamnose mutarotase (104 aa).

Y18 lines the substrate pocket. H22 functions as the Proton donor in the catalytic mechanism. Residues Y41 and 76–77 (WW) each bind substrate.

This sequence belongs to the rhamnose mutarotase family. As to quaternary structure, homodimer.

It is found in the cytoplasm. It carries out the reaction alpha-L-rhamnose = beta-L-rhamnose. The protein operates within carbohydrate metabolism; L-rhamnose metabolism. Functionally, involved in the anomeric conversion of L-rhamnose. The sequence is that of L-rhamnose mutarotase from Escherichia coli O7:K1 (strain IAI39 / ExPEC).